Consider the following 142-residue polypeptide: Peptide methionine sulfoxide reductase MsrB (142 aa).

The MsrB domain maps to 10–132 (EEEWKKVLTP…NSVSLNFKTE (123 aa)). Zn(2+)-binding residues include C49, C52, C98, and C101. C121 (nucleophile) is an active-site residue.

Belongs to the MsrB Met sulfoxide reductase family. Zn(2+) is required as a cofactor.

The enzyme catalyses L-methionyl-[protein] + [thioredoxin]-disulfide + H2O = L-methionyl-(R)-S-oxide-[protein] + [thioredoxin]-dithiol. This chain is Peptide methionine sulfoxide reductase MsrB, found in Methanosarcina barkeri (strain Fusaro / DSM 804).